The primary structure comprises 180 residues: Large ribosomal subunit protein uL6 (180 aa).

It belongs to the universal ribosomal protein uL6 family. As to quaternary structure, part of the 50S ribosomal subunit.

Its function is as follows. This protein binds to the 23S rRNA, and is important in its secondary structure. It is located near the subunit interface in the base of the L7/L12 stalk, and near the tRNA binding site of the peptidyltransferase center. This is Large ribosomal subunit protein uL6 from Borreliella afzelii (strain PKo) (Borrelia afzelii).